The chain runs to 687 residues: Auxin response factor 14 (687 aa).

The TF-B3 DNA-binding region spans 133 to 235 (FCKTLTASDT…QLRLGVRRAV (103 aa)).

Belongs to the ARF family. As to quaternary structure, homo and heterodimers. As to expression, expressed in roots, culms, leaves and young panicles.

It localises to the nucleus. Its function is as follows. Auxin response factors (ARFs) are transcriptional factors that bind specifically to the DNA sequence 5'-TGTCTC-3' found in the auxin-responsive promoter elements (AuxREs). The polypeptide is Auxin response factor 14 (ARF14) (Oryza sativa subsp. japonica (Rice)).